The chain runs to 388 residues: Lamin tail domain-containing protein 1 (388 aa).

The 119-residue stretch at E136–H254 folds into the LTD domain. Residues E349 to Q388 are disordered. Basic residues predominate over residues R365 to K381.

It belongs to the intermediate filament family.

The chain is Lamin tail domain-containing protein 1 (LMNTD1) from Homo sapiens (Human).